A 482-amino-acid chain; its full sequence is MQKPIKKDPNRYHGEKMTEFSEWFHNILEEAEIIDQRYPVKGMHVWMPHGFMIRKNTLKILRRILDRDHEEVLFPLLVPEDELAKEAIHVKGFEDEVYWVTHGGLSKLQRKLALRPTSETVMYPMFALWVRSHTDLPMRFYQVVNTFRYETKHTRPLIRVREITTFKEAHTIHATASEAEEQVERAVEIYKEFFNSLGIPYLITRRPPWDKFPGSEYTVAFDTLMPDGKTLQIGTVHNLGQTFARTFEIKFETPEGDHEYVHQTCYGLSDRVIASVIAIHGDESGLCLPPDVAAHQVVIVPIIFKKAAEEVMEACRELRSRLEAAGFRVHLDDRDIRAGRKYYEWEMRGVPLRVEIGPRDLEKGAAVISRRDTGEKVTADLQGIEETLRELMKDILENLRTRAWERMESEIREAETLEEASRIVDEKRGIISFMWCGEEECGMDVEEKVRVDILGIQEEGSGTCINCGREAPTGLTLPEHIS.

The L-proline site is built by Thr117, Glu119, and Arg148. ATP-binding residues include Arg148, Glu150, Gln232, and Thr235. His237 is an L-proline binding site. Ser269 is a binding site for ATP. The interaction with tRNA stretch occupies residues Glu346–Lys376. Residues Cys436, Cys441, Cys464, and Cys467 each coordinate Zn(2+).

The protein belongs to the class-II aminoacyl-tRNA synthetase family. ProS type 3 subfamily. In terms of assembly, homodimer. The dimer is functionally asymmetric: only one of the two active sites at a time is able to form prolyl-adenylate, and only one tRNA molecule binds per dimer. Interacts with LeuRS, which enhances tRNA(Pro) aminoacylation.

The protein resides in the cytoplasm. It carries out the reaction tRNA(Pro) + L-proline + ATP = L-prolyl-tRNA(Pro) + AMP + diphosphate. Functionally, catalyzes the attachment of proline to tRNA(Pro) in a two-step reaction: proline is first activated by ATP to form Pro-AMP and then transferred to the acceptor end of tRNA(Pro). Can inadvertently accommodate and process cysteine. The chain is Proline--tRNA ligase (proS) from Methanothermobacter thermautotrophicus (strain ATCC 29096 / DSM 1053 / JCM 10044 / NBRC 100330 / Delta H) (Methanobacterium thermoautotrophicum).